We begin with the raw amino-acid sequence, 460 residues long: CUGBP Elav-like family member 6 (460 aa).

Low complexity predominate over residues 1 to 10 (MAAAPGGSAP). The tract at residues 1-37 (MAAAPGGSAPPAGPSPRLAFSTADSGGGMSGLNPGPA) is disordered. RRM domains follow at residues 46-127 (IKLF…PAAS) and 134-214 (RKLF…LADT). Positions 316–336 (NGFGSLTPQSNGQPGSDTLYN) are disordered. Residues 319 to 336 (GSLTPQSNGQPGSDTLYN) show a composition bias toward polar residues. The 79-residue stretch at 375 to 453 (CNLFIYHLPQ…KRLKVQLKRP (79 aa)) folds into the RRM 3 domain.

This sequence belongs to the CELF/BRUNOL family.

The protein localises to the nucleus. Its subcellular location is the cytoplasm. Its function is as follows. RNA-binding protein implicated in the regulation of pre-mRNA alternative splicing. Mediates exon inclusion and/or exclusion in pre-mRNA that are subject to tissue-specific and developmentally regulated alternative splicing. Specifically activates exon 5 inclusion of TNNT2 in a muscle-specific splicing enhancer (MSE)-dependent manner. Promotes also exon exclusion of INSR pre-mRNA. The sequence is that of CUGBP Elav-like family member 6 (Celf6) from Mus musculus (Mouse).